The chain runs to 674 residues: Translation factor GUF1, mitochondrial (674 aa).

The N-terminal 48 residues, 1-48 (MRGCLQPARWLTTATLRRPLLSCPRQLPTRYNPFPRPFHHAPVLQARQ), are a transit peptide targeting the mitochondrion. The 181-residue stretch at 66–246 (ERYRNFCIVA…AIIESIPALL (181 aa)) folds into the tr-type G domain. GTP is bound by residues 75–82 (AHVDHGKS), 139–143 (DTPGH), and 193–196 (NKVD).

It belongs to the TRAFAC class translation factor GTPase superfamily. Classic translation factor GTPase family. LepA subfamily.

The protein resides in the mitochondrion inner membrane. It catalyses the reaction GTP + H2O = GDP + phosphate + H(+). Promotes mitochondrial protein synthesis. May act as a fidelity factor of the translation reaction, by catalyzing a one-codon backward translocation of tRNAs on improperly translocated ribosomes. Binds to mitochondrial ribosomes in a GTP-dependent manner. This chain is Translation factor GUF1, mitochondrial, found in Arthroderma otae (strain ATCC MYA-4605 / CBS 113480) (Microsporum canis).